Here is a 605-residue protein sequence, read N- to C-terminus: Probable potassium transport system protein Kup 2 (605 aa).

Transmembrane regions (helical) follow at residues 17-37 (GLVF…IMTL), 45-65 (VLGI…VEYA), 96-116 (MAFA…DGVI), 139-159 (AQGG…IFQF), 169-189 (FGPI…VSII), 211-231 (GLAG…GEAL), 246-266 (AWYF…AFIL), 286-306 (LYIP…QALI), 338-358 (IYIG…MILF), 367-387 (AYGL…TMIF), 394-414 (WKVP…TANL), and 417-437 (LPHG…IMVI).

It belongs to the HAK/KUP transporter (TC 2.A.72) family.

Its subcellular location is the cell inner membrane. It catalyses the reaction K(+)(in) + H(+)(in) = K(+)(out) + H(+)(out). Functionally, transport of potassium into the cell. Likely operates as a K(+):H(+) symporter. The polypeptide is Probable potassium transport system protein Kup 2 (Geobacter sulfurreducens (strain ATCC 51573 / DSM 12127 / PCA)).